A 490-amino-acid polypeptide reads, in one-letter code: Histone-lysine N-methyltransferase SMYD1 (490 aa).

Positions 7-253 constitute an SET domain; the sequence is ENVEVFTAEG…EGEELTVSYI (247 aa). Residue 17 to 19 participates in S-adenosyl-L-methionine binding; that stretch reads KGR. Positions 52, 55, 65, 68, 74, 78, 86, and 90 each coordinate Zn(2+). The segment at 52–90 adopts an MYND-type zinc-finger fold; sequence CHTCFKRQEKLHRCGQCKFAHYCDRTCQKDAWLNHKNEC. S-adenosyl-L-methionine contacts are provided by residues His-135 and 205 to 206; that span reads NH. Cys-208 serves as a coordination point for Zn(2+). An S-adenosyl-L-methionine-binding site is contributed by 270–272; sequence YYF. Residues Cys-274, Cys-276, and Cys-279 each coordinate Zn(2+).

This sequence belongs to the class V-like SAM-binding methyltransferase superfamily. As to quaternary structure, interacts with HDAC1, HDAC2 and HDAC3. Interacts (via MYND-type zinc finger) with NACA isoform skNAC. Expression seems mostly restricted to heart and skeletal muscle.

Its subcellular location is the cytoplasm. The protein localises to the nucleus. It carries out the reaction L-lysyl(4)-[histone H3] + 3 S-adenosyl-L-methionine = N(6),N(6),N(6)-trimethyl-L-lysyl(4)-[histone H3] + 3 S-adenosyl-L-homocysteine + 3 H(+). Its function is as follows. Methylates histone H3 at 'Lys-4' (H3K4me), seems able to perform both mono-, di-, and trimethylation. Acts as a transcriptional repressor. Essential for cardiomyocyte differentiation and cardiac morphogenesis. The sequence is that of Histone-lysine N-methyltransferase SMYD1 (SMYD1) from Homo sapiens (Human).